The chain runs to 1894 residues: Plexin-A1 (1894 aa).

The first 27 residues, 1 to 27 (MPLPPLSSRTLLLLLLLLLRGVWIAIS), serve as a signal peptide directing secretion. One can recognise a Sema domain in the interval 28–510 (SPPAGLGPQP…TEKQVTQVPV (483 aa)). Residues 28 to 1242 (SPPAGLGPQP…VYSDSLLTLP (1215 aa)) lie on the Extracellular side of the membrane. Asn-75 carries an N-linked (GlcNAc...) asparagine glycan. Disulfide bonds link Cys-93/Cys-102, Cys-128/Cys-136, Cys-284/Cys-405, Cys-300/Cys-356, Cys-374/Cys-393, Cys-513/Cys-530, Cys-519/Cys-561, Cys-522/Cys-539, Cys-533/Cys-545, and Cys-596/Cys-615. Residues Asn-658, Asn-670, and Asn-699 are each glycosylated (N-linked (GlcNAc...) asparagine). 4 consecutive IPT/TIG domains span residues 862–957 (PKIL…FTFV), 959–1043 (PTFY…YNYT), 1046–1145 (PTIL…FLYY), and 1148–1234 (PVLE…LQVY). N-linked (GlcNAc...) asparagine glycosylation occurs at Asn-1041. Residues Asn-1185 and Asn-1210 are each glycosylated (N-linked (GlcNAc...) asparagine). Residues 1243–1263 (AIVGIGGGGGLLLLVIVAVLI) traverse the membrane as a helical segment. Residues 1262-1315 (LIAYKRKSRDADRTLKRLQLQMDNLESRVALECKEAFAELQTDIHELTSDLDGA) adopt a coiled-coil conformation. The Cytoplasmic portion of the chain corresponds to 1264 to 1894 (AYKRKSRDAD…QVVDTMALSS (631 aa)).

The protein belongs to the plexin family. In terms of assembly, interacts directly with NRP1 and NRP2. Interacts with PLXN1B. Interacts with FARP2, RND1 and KDR/VEGFR2. Binding of SEMA3A leads to dissociation of FARP2. Interacts with CRMP1, DPYSL2/CRMP2, DPYSL3/CRMP3 and DPYSL4/CRMP4. Interacts (via TIG domains) with TREM2; the interaction mediates SEMA6D binding and signaling through TYROBP. In terms of tissue distribution, ubiquitous.

It localises to the cell membrane. In terms of biological role, coreceptor for SEMA3A, SEMA3C, SEMA3F and SEMA6D. Necessary for signaling by class 3 semaphorins and subsequent remodeling of the cytoskeleton. Plays a role in axon guidance, invasive growth and cell migration. Class 3 semaphorins bind to a complex composed of a neuropilin and a plexin. The plexin modulates the affinity of the complex for specific semaphorins, and its cytoplasmic domain is required for the activation of down-stream signaling events in the cytoplasm. Acts as coreceptor of TREM2 for SEMA6D in dendritic cells and is involved in the generation of immune responses and skeletal homeostasis. The polypeptide is Plexin-A1 (Plxna1) (Mus musculus (Mouse)).